Here is a 461-residue protein sequence, read N- to C-terminus: Protein transport protein HofB homolog (461 aa).

Residue 222–229 participates in ATP binding; that stretch reads GPTGSGKT.

This sequence belongs to the GSP E family.

In Escherichia coli (strain K12), this protein is Protein transport protein HofB homolog (hofB).